We begin with the raw amino-acid sequence, 540 residues long: 2-isopropylmalate synthase (540 aa).

Positions 8 to 269 (VLIFDTTLRD…YFNPFFGREP (262 aa)) constitute a Pyruvate carboxyltransferase domain. Residues Asp-17, His-208, His-210, and Asn-244 each coordinate Mn(2+). The tract at residues 408–540 (QLRLVQVSCG…AVLADLRSGI (133 aa)) is regulatory domain.

The protein belongs to the alpha-IPM synthase/homocitrate synthase family. LeuA type 1 subfamily. Homodimer. It depends on Mn(2+) as a cofactor.

The protein resides in the cytoplasm. The enzyme catalyses 3-methyl-2-oxobutanoate + acetyl-CoA + H2O = (2S)-2-isopropylmalate + CoA + H(+). It functions in the pathway amino-acid biosynthesis; L-leucine biosynthesis; L-leucine from 3-methyl-2-oxobutanoate: step 1/4. In terms of biological role, catalyzes the condensation of the acetyl group of acetyl-CoA with 3-methyl-2-oxobutanoate (2-ketoisovalerate) to form 3-carboxy-3-hydroxy-4-methylpentanoate (2-isopropylmalate). This chain is 2-isopropylmalate synthase, found in Prochlorococcus marinus (strain MIT 9313).